Consider the following 152-residue polypeptide: Deoxyuridine 5'-triphosphate nucleotidohydrolase (152 aa).

Substrate is bound by residues 65–67 (RSG), Asn-78, and 82–84 (TID).

Belongs to the dUTPase family. Requires Mg(2+) as cofactor.

It carries out the reaction dUTP + H2O = dUMP + diphosphate + H(+). The protein operates within pyrimidine metabolism; dUMP biosynthesis; dUMP from dCTP (dUTP route): step 2/2. In terms of biological role, this enzyme is involved in nucleotide metabolism: it produces dUMP, the immediate precursor of thymidine nucleotides and it decreases the intracellular concentration of dUTP so that uracil cannot be incorporated into DNA. The chain is Deoxyuridine 5'-triphosphate nucleotidohydrolase from Chlorobaculum tepidum (strain ATCC 49652 / DSM 12025 / NBRC 103806 / TLS) (Chlorobium tepidum).